A 554-amino-acid chain; its full sequence is Thermosome subunit beta (554 aa).

Residues 532–554 are disordered; it reads GKKSGSEPSGKKEKDKEEKSSED. Basic and acidic residues predominate over residues 540-554; it reads SGKKEKDKEEKSSED.

The protein belongs to the TCP-1 chaperonin family. In terms of assembly, forms a Heterooligomeric complex of two stacked eight-membered rings.

Its function is as follows. Molecular chaperone; binds unfolded polypeptides in vitro, and has a weak ATPase activity. The polypeptide is Thermosome subunit beta (thsB) (Saccharolobus solfataricus (strain ATCC 35092 / DSM 1617 / JCM 11322 / P2) (Sulfolobus solfataricus)).